Consider the following 189-residue polypeptide: Chitin synthase 2 (189 aa).

It belongs to the chitin synthase family. Class II subfamily.

Its subcellular location is the cell membrane. The enzyme catalyses [(1-&gt;4)-N-acetyl-beta-D-glucosaminyl](n) + UDP-N-acetyl-alpha-D-glucosamine = [(1-&gt;4)-N-acetyl-beta-D-glucosaminyl](n+1) + UDP + H(+). Functionally, polymerizes chitin, a structural polymer of the cell wall and septum, by transferring the sugar moiety of UDP-GlcNAc to the non-reducing end of the growing chitin polymer. The protein is Chitin synthase 2 (chs2) of Aspergillus niger.